The sequence spans 400 residues: MGFVLVPKSDFQIPLEADTIRPDLFEGLDLDEIRSLQVYEGNIKRPLGEFFEIAETPHADQLIRIDGDVSRVKYIGSGMKSGKIIINGDVGLQLGCEMKGGEIEVNGNVSSWIGMEMHGGTIKINGNAGDYVGCAYRGEWRGMKGGKIIIQGNAGNNIGGGMMAGEIYIGGDAGNFCGIRMNGGEITVRGDAGRAPGAEMVSGIIKIHGRISSLLPGFKEISTFKEDGSLMILFKGDLSEKNPEGNLYINYNKNLHILENETDEGRVITKKGIKVIYNSGSTIREGQIIKGGNKLTDDYIDECARCCISPEDYKLLGEPENVVVSSHGNEVVLRAVEDPGIQMGTIFIPRGIWANVLTPPYTESTGSPMYKGVPVYLRKASQGERILSAEELVEEYGVGK.

Tandem repeats lie at residues 76-88 (GSGM…IING), 95-107 (GCEM…EVNG), 114-126 (GMEM…KING), 140-152 (WRGM…IIQG), 159-171 (GGGM…YIGG), 178-190 (GIRM…TVRG), and 197-209 (GAEM…KIHG). The 7 X 13 AA repeats of [GW]-X-X-M-X-X-G-X-I-X-[IV]-X-G stretch occupies residues 76-209 (GSGMKSGKII…MVSGIIKIHG (134 aa)).

This sequence in the N-terminal section; belongs to the FwdC/FmdC family. The protein in the C-terminal section; belongs to the molybdenum dinucleotide binding protein family. Consists of five subunits; FmdA, FmdB, FmdC, FmdD, and FmdE.

It carries out the reaction N-formylmethanofuran + 2 oxidized [2Fe-2S]-[ferredoxin] + H2O = methanofuran + 2 reduced [2Fe-2S]-[ferredoxin] + CO2 + H(+). The protein operates within one-carbon metabolism; methanogenesis from CO(2); 5,10-methenyl-5,6,7,8-tetrahydromethanopterin from CO(2): step 1/3. Inactivated by cyanide. Functionally, catalyzes the reversible oxidation of CO(2) and methanofuran (MFR) to N-formylmethanofuran (CHO-MFR). Can only oxidize formylmethanofuran. This enzyme is oxygen-labile. The polypeptide is Molybdenum-containing formylmethanofuran dehydrogenase 1 subunit C (fmdC) (Methanothermobacter thermautotrophicus (strain ATCC 29096 / DSM 1053 / JCM 10044 / NBRC 100330 / Delta H) (Methanobacterium thermoautotrophicum)).